We begin with the raw amino-acid sequence, 1178 residues long: DNA-directed RNA polymerase subunit beta' (1178 aa).

Zn(2+) is bound by residues Cys-60, Cys-62, Cys-75, and Cys-78. Mg(2+)-binding residues include Asp-450, Asp-452, and Asp-454. Residues Cys-795, Cys-869, Cys-876, and Cys-879 each coordinate Zn(2+).

Belongs to the RNA polymerase beta' chain family. The RNAP catalytic core consists of 2 alpha, 1 beta, 1 beta' and 1 omega subunit. When a sigma factor is associated with the core the holoenzyme is formed, which can initiate transcription. Requires Mg(2+) as cofactor. Zn(2+) serves as cofactor.

It carries out the reaction RNA(n) + a ribonucleoside 5'-triphosphate = RNA(n+1) + diphosphate. In terms of biological role, DNA-dependent RNA polymerase catalyzes the transcription of DNA into RNA using the four ribonucleoside triphosphates as substrates. The sequence is that of DNA-directed RNA polymerase subunit beta' from Clostridium botulinum (strain Langeland / NCTC 10281 / Type F).